The primary structure comprises 287 residues: UPF0761 membrane protein MS0032 (287 aa).

A run of 6 helical transmembrane segments spans residues 37–57 (MLAI…FPMF), 93–113 (SMSA…INQI), 128–148 (FIFS…FIGM), 174–194 (LLSF…YTLV), 204–224 (AAVG…AFAW), and 238–258 (AMAT…FILL).

This sequence belongs to the UPF0761 family.

It localises to the cell inner membrane. The chain is UPF0761 membrane protein MS0032 from Mannheimia succiniciproducens (strain KCTC 0769BP / MBEL55E).